A 468-amino-acid polypeptide reads, in one-letter code: ATP synthase subunit beta (468 aa).

155 to 162 lines the ATP pocket; that stretch reads GGAGVGKT.

The protein belongs to the ATPase alpha/beta chains family. In terms of assembly, F-type ATPases have 2 components, CF(1) - the catalytic core - and CF(0) - the membrane proton channel. CF(1) has five subunits: alpha(3), beta(3), gamma(1), delta(1), epsilon(1). CF(0) has three main subunits: a(1), b(2) and c(9-12). The alpha and beta chains form an alternating ring which encloses part of the gamma chain. CF(1) is attached to CF(0) by a central stalk formed by the gamma and epsilon chains, while a peripheral stalk is formed by the delta and b chains.

It localises to the cell membrane. It carries out the reaction ATP + H2O + 4 H(+)(in) = ADP + phosphate + 5 H(+)(out). Produces ATP from ADP in the presence of a proton gradient across the membrane. The catalytic sites are hosted primarily by the beta subunits. This Bacillus cereus (strain ATCC 10987 / NRS 248) protein is ATP synthase subunit beta.